The sequence spans 457 residues: Ribulose bisphosphate carboxylase large chain (457 aa).

Residues 1-2 (MS) constitute a propeptide that is removed on maturation. Pro3 is modified (N-acetylproline). At Lys14 the chain carries N6,N6,N6-trimethyllysine. 2 residues coordinate substrate: Asn123 and Thr173. Lys175 functions as the Proton acceptor in the catalytic mechanism. A substrate-binding site is contributed by Lys177. Residues Lys201, Asp203, and Glu204 each contribute to the Mg(2+) site. The residue at position 201 (Lys201) is an N6-carboxylysine. His294 functions as the Proton acceptor in the catalytic mechanism. Substrate is bound by residues Arg295, His327, and Ser379.

The protein belongs to the RuBisCO large chain family. Type I subfamily. As to quaternary structure, heterohexadecamer of 8 large chains and 8 small chains; disulfide-linked. The disulfide link is formed within the large subunit homodimers. Requires Mg(2+) as cofactor. Post-translationally, the disulfide bond which can form in the large chain dimeric partners within the hexadecamer appears to be associated with oxidative stress and protein turnover.

It is found in the plastid. The protein resides in the chloroplast. It catalyses the reaction 2 (2R)-3-phosphoglycerate + 2 H(+) = D-ribulose 1,5-bisphosphate + CO2 + H2O. The enzyme catalyses D-ribulose 1,5-bisphosphate + O2 = 2-phosphoglycolate + (2R)-3-phosphoglycerate + 2 H(+). RuBisCO catalyzes two reactions: the carboxylation of D-ribulose 1,5-bisphosphate, the primary event in carbon dioxide fixation, as well as the oxidative fragmentation of the pentose substrate in the photorespiration process. Both reactions occur simultaneously and in competition at the same active site. In Phelline comosa, this protein is Ribulose bisphosphate carboxylase large chain.